Consider the following 478-residue polypeptide: MDQMTVEEKILEHQELEDGSSSFRWLVSSTVIAIGGATVALYISGKIDWKIPAIEAGLALTAGGTITCGYLWFKKRVKTVRKLILQMNKTRSALRKRRQIFFSISMCMPRHRHPSILRACRLTVSAIECLTEETKSLNNGTTWQDLYTDEIREIISRSTVDSQLLKIEEIQEGDNDKMDFEQVFETLISIFKLHASEYSRVVILNFLNSPVFESKKVSKFFETLGRLQELMYNLESVERLALKTETKLSRNERKMDGKMKNKSLLELGWKQQTALALEAILERLESESVTQSEVESALHKTFLVVKAEPAFPQPVKKIDVEVKNQDQKNPEVIVIEKGTGERTDIDMVFEGTPLSEADKLSASKSAVARDVLLDGSEGRCHEASLFGELKMVLEPRRTDFAKRERTALAKFYGVDEHQLEQKEDEETFEAIASGDGEDPDPYDWRKDAEMSAGIHHDANNDDFLKSLKLRRVDDDIIE.

Over 1 to 24 (MDQMTVEEKILEHQELEDGSSSFR) the chain is Cytoplasmic. Residues 25–45 (WLVSSTVIAIGGATVALYISG) form a helical membrane-spanning segment. The Extracellular portion of the chain corresponds to 46–52 (KIDWKIP). The helical transmembrane segment at 53–73 (AIEAGLALTAGGTITCGYLWF) threads the bilayer. Topologically, residues 74-478 (KKRVKTVRKL…LRRVDDDIIE (405 aa)) are cytoplasmic.

The protein localises to the mitochondrion. Its subcellular location is the mitochondrion outer membrane. In terms of biological role, in the first mitotic division in embryos, required for mitotic spindle alignment and asymmetric cell division. Required for motor-driven chromosome movement and homolog searching within the nucleus, and subsequently ensures homologous chromosome pairing during the prophase stage of meiosis. This chain is Spindle defective protein 3, found in Caenorhabditis elegans.